The following is a 62-amino-acid chain: Alpha-elapitoxin-Pc1 (62 aa).

Intrachain disulfides connect cysteine 3/cysteine 24, cysteine 17/cysteine 41, cysteine 43/cysteine 54, and cysteine 55/cysteine 60.

It belongs to the three-finger toxin family. Short-chain subfamily. Type I alpha-neurotoxin sub-subfamily. In terms of tissue distribution, expressed by the venom gland.

Its subcellular location is the secreted. Bird-specific neurotoxin (tested on chicken) that acts as pseudo-irreversible antagonists at the nicotinic acetylcholine receptor (nAChR) of the skeletal neuromuscular junction. Has no significant effect on the electrically-induced twitches of the rat isolated phrenic nerve-diaphragm preparation. This is Alpha-elapitoxin-Pc1 from Pseudechis colletti (Collett's snake).